The sequence spans 236 residues: Demethylmenaquinone methyltransferase (236 aa).

S-adenosyl-L-methionine-binding positions include Thr-58, Asp-79, and 106–107; that span reads NA.

The protein belongs to the class I-like SAM-binding methyltransferase superfamily. MenG/UbiE family.

The catalysed reaction is a 2-demethylmenaquinol + S-adenosyl-L-methionine = a menaquinol + S-adenosyl-L-homocysteine + H(+). It participates in quinol/quinone metabolism; menaquinone biosynthesis; menaquinol from 1,4-dihydroxy-2-naphthoate: step 2/2. Methyltransferase required for the conversion of demethylmenaquinol (DMKH2) to menaquinol (MKH2). The protein is Demethylmenaquinone methyltransferase of Alkalihalophilus pseudofirmus (strain ATCC BAA-2126 / JCM 17055 / OF4) (Bacillus pseudofirmus).